The chain runs to 215 residues: MRFFIDTANVEDIKKAHKMGILDGVTTNPSLVAKEGVDFHTRLREICEIVGDVSVSAEVIALDAEGMIREGKELAQIAPNITVKVPMTPAGLEAVAALSKENITTNVTLIFNPNQALLAARAGATYVSPFLGRLDDIGQDGMGLVETIAQIFVIHDIPTQIIAASVRNPVHVTNAALAGADIATIPLNVIESLTQHPLTTQGIERFLADWEKAQQ.

The active-site Schiff-base intermediate with substrate is Lys-84.

It belongs to the transaldolase family. Type 3B subfamily.

Its subcellular location is the cytoplasm. It catalyses the reaction D-sedoheptulose 7-phosphate + D-glyceraldehyde 3-phosphate = D-erythrose 4-phosphate + beta-D-fructose 6-phosphate. The protein operates within carbohydrate degradation; pentose phosphate pathway; D-glyceraldehyde 3-phosphate and beta-D-fructose 6-phosphate from D-ribose 5-phosphate and D-xylulose 5-phosphate (non-oxidative stage): step 2/3. In terms of biological role, transaldolase is important for the balance of metabolites in the pentose-phosphate pathway. In Exiguobacterium sibiricum (strain DSM 17290 / CCUG 55495 / CIP 109462 / JCM 13490 / 255-15), this protein is Probable transaldolase.